The chain runs to 155 residues: Small ribosomal subunit protein uS7cz/uS7cy (155 aa).

This sequence belongs to the universal ribosomal protein uS7 family. As to quaternary structure, part of the 30S ribosomal subunit.

Its subcellular location is the plastid. It localises to the chloroplast. One of the primary rRNA binding proteins, it binds directly to 16S rRNA where it nucleates assembly of the head domain of the 30S subunit. The polypeptide is Small ribosomal subunit protein uS7cz/uS7cy (rps7-A) (Drimys granadensis).